Here is a 304-residue protein sequence, read N- to C-terminus: Acetyl-coenzyme A carboxylase carboxyl transferase subunit beta (304 aa).

The 270-residue stretch at 25–294 (VWTKCDSCGQ…PSVVESKADT (270 aa)) folds into the CoA carboxyltransferase N-terminal domain. Zn(2+) contacts are provided by Cys29, Cys32, Cys48, and Cys51. The segment at 29-51 (CDSCGQVLYRAELERNLEVCPKC) adopts a C4-type zinc-finger fold.

The protein belongs to the AccD/PCCB family. Acetyl-CoA carboxylase is a heterohexamer composed of biotin carboxyl carrier protein (AccB), biotin carboxylase (AccC) and two subunits each of ACCase subunit alpha (AccA) and ACCase subunit beta (AccD). Requires Zn(2+) as cofactor.

Its subcellular location is the cytoplasm. It catalyses the reaction N(6)-carboxybiotinyl-L-lysyl-[protein] + acetyl-CoA = N(6)-biotinyl-L-lysyl-[protein] + malonyl-CoA. Its pathway is lipid metabolism; malonyl-CoA biosynthesis; malonyl-CoA from acetyl-CoA: step 1/1. Its function is as follows. Component of the acetyl coenzyme A carboxylase (ACC) complex. Biotin carboxylase (BC) catalyzes the carboxylation of biotin on its carrier protein (BCCP) and then the CO(2) group is transferred by the transcarboxylase to acetyl-CoA to form malonyl-CoA. This chain is Acetyl-coenzyme A carboxylase carboxyl transferase subunit beta, found in Yersinia pestis bv. Antiqua (strain Nepal516).